The primary structure comprises 432 residues: Metacaspase-1 (432 aa).

Residues 1–11 show a composition bias toward basic residues; it reads MEVMDHHHHTS. Disordered regions lie at residues 1-21 and 41-87; these read MEVM…TTRR and PQPG…PNAP. Residues 12–21 show a composition bias toward low complexity; the sequence is STRPNPTTRR. Positions 46 to 74 are enriched in pro residues; that stretch reads GAPPPQGGYGYPQPPPPQQPYGYSQPPPQ. Active-site residues include H223 and C279.

Belongs to the peptidase C14B family.

Involved in cell death (apoptosis). This chain is Metacaspase-1 (casA), found in Sclerotinia sclerotiorum (strain ATCC 18683 / 1980 / Ss-1) (White mold).